The chain runs to 855 residues: MLLHETESEYDSKSKKNNYSYYESSDFKPLIEKYNRIKYSVTEYIYLLTVKNVVLFPDVVIPITAVKQKSINLFKSAYYTYKKIGILTKKYFNTTFSIAKLNIQTFNIYSFNKFNKINKFNKINKFNKINKFNKINKFNKINKFNKTNNIYYIGTVAKILKLLIMPDGNTTVILQGISRFKIIKLIQVYPYFKAEIIYLKDEKPQKKDKEYLILIDSIKEIAIKIIQDNYKIPSESSFAISNIESKSFLINFVAYNLNIEIKNKQILLEYDFLKQRAIETFRFLNIEYEKIKLKNDIQYRVRYDIDQQQKEYFLNQQIKALQEELGDFSYEKEVEVLRIKSYKKNWSKEAQNQFDRELSKLKRTNPQMPEYTILRNYLDLMLDLPWKKYSQDNYDLYRAQKILDKDHFGIDKVKERIIEYLSVLKLKGDLRSPILCFYGPPGVGKTSLGRSIASALNRKYVRISLGGLNDEAEIRGHRKTYIGAMPGRVLQSIKKAGTSNPVFVLDEIDKMGLGSQGNPSSAMLEVLDPEQNKEFYDNFLEMGYDLSKVIFIATANSLYTINIALLDRMEIIDMNGYTVEEKIEISKKHLIPKQLKENGLKSKDIILGVKQIEKIIESYTRESGVRSLEKNISKIVRYAAKNIAMNKKYLKRINMSKIEEVLGPPNDPEKYELIQVPGVVTGLAWTIVGGEIIYIESTLLKGRGNLSITGNVGEVMKESATIAFKYIKAHNYEFGIDEKMFELYNIHIHAPEGGIHKDGPSAGITMLTSIISSFLKKKIRPYLAMTGEITLRGKVLPVGGIKEKILAAKRANIKEIILSKANKKDIDDIKKVYLKGLKFHFVSKMNEVIDLSIIK.

In terms of domain architecture, Lon N-terminal spans 45-288; the sequence is IYLLTVKNVV…ETFRFLNIEY (244 aa). 439–446 provides a ligand contact to ATP; that stretch reads GPPGVGKT. The Lon proteolytic domain occupies 674-855; sequence IQVPGVVTGL…NEVIDLSIIK (182 aa). Active-site residues include Ser-761 and Lys-804.

Belongs to the peptidase S16 family. As to quaternary structure, homohexamer. Organized in a ring with a central cavity.

The protein resides in the cytoplasm. It catalyses the reaction Hydrolysis of proteins in presence of ATP.. ATP-dependent serine protease that mediates the selective degradation of mutant and abnormal proteins as well as certain short-lived regulatory proteins. Required for cellular homeostasis and for survival from DNA damage and developmental changes induced by stress. Degrades polypeptides processively to yield small peptide fragments that are 5 to 10 amino acids long. Binds to DNA in a double-stranded, site-specific manner. This chain is Lon protease, found in Karelsulcia muelleri (strain GWSS) (Sulcia muelleri).